The primary structure comprises 256 residues: uncharacterized protein (256 aa).

Residues 7–62 (PAERQKTLLNLISKQSVISINNLVNILGVSHMTVRRDIQKLEEDGKVISVSGGVQL) enclose the HTH deoR-type domain. The H-T-H motif DNA-binding region spans 24 to 43 (ISINNLVNILGVSHMTVRRD).

This is an uncharacterized protein from Haemophilus influenzae (strain ATCC 51907 / DSM 11121 / KW20 / Rd).